The primary structure comprises 336 residues: Ketol-acid reductoisomerase (NADP(+)) (336 aa).

A KARI N-terminal Rossmann domain is found at 1–181 (MNVYYDKDCN…GGGRTGIIET (181 aa)). Residues 24-27 (YGSQ), Arg-47, Ser-50, Ser-52, and 82-85 (DEFQ) contribute to the NADP(+) site. His-107 is a catalytic residue. Gly-133 provides a ligand contact to NADP(+). The 146-residue stretch at 182 to 327 (TFQDETETDL…GKLRSMMPWI (146 aa)) folds into the KARI C-terminal knotted domain. Residues Asp-190, Glu-194, Glu-226, and Glu-230 each contribute to the Mg(2+) site. A substrate-binding site is contributed by Ser-251.

Belongs to the ketol-acid reductoisomerase family. Mg(2+) is required as a cofactor.

It carries out the reaction (2R)-2,3-dihydroxy-3-methylbutanoate + NADP(+) = (2S)-2-acetolactate + NADPH + H(+). The catalysed reaction is (2R,3R)-2,3-dihydroxy-3-methylpentanoate + NADP(+) = (S)-2-ethyl-2-hydroxy-3-oxobutanoate + NADPH + H(+). Its pathway is amino-acid biosynthesis; L-isoleucine biosynthesis; L-isoleucine from 2-oxobutanoate: step 2/4. It functions in the pathway amino-acid biosynthesis; L-valine biosynthesis; L-valine from pyruvate: step 2/4. In terms of biological role, involved in the biosynthesis of branched-chain amino acids (BCAA). Catalyzes an alkyl-migration followed by a ketol-acid reduction of (S)-2-acetolactate (S2AL) to yield (R)-2,3-dihydroxy-isovalerate. In the isomerase reaction, S2AL is rearranged via a Mg-dependent methyl migration to produce 3-hydroxy-3-methyl-2-ketobutyrate (HMKB). In the reductase reaction, this 2-ketoacid undergoes a metal-dependent reduction by NADPH to yield (R)-2,3-dihydroxy-isovalerate. This is Ketol-acid reductoisomerase (NADP(+)) from Geotalea daltonii (strain DSM 22248 / JCM 15807 / FRC-32) (Geobacter daltonii).